The following is a 344-amino-acid chain: Protein RecA (344 aa).

65–72 (GPESSGKT) is a binding site for ATP.

The protein belongs to the RecA family.

It localises to the cytoplasm. In terms of biological role, can catalyze the hydrolysis of ATP in the presence of single-stranded DNA, the ATP-dependent uptake of single-stranded DNA by duplex DNA, and the ATP-dependent hybridization of homologous single-stranded DNAs. It interacts with LexA causing its activation and leading to its autocatalytic cleavage. In Campylobacter lari, this protein is Protein RecA.